Consider the following 858-residue polypeptide: Magnesium transporter ALR2 (858 aa).

The span at methionine 1–leucine 14 shows a compositional bias: low complexity. 3 disordered regions span residues methionine 1–tyrosine 81, threonine 318–serine 337, and asparagine 365–aspartate 396. The Cytoplasmic segment spans residues methionine 1–lysine 741. Residues proline 46–aspartate 61 are compositionally biased toward basic and acidic residues. Residues serine 67 to tyrosine 81 show a composition bias toward low complexity. 2 stretches are compositionally biased toward basic and acidic residues: residues glutamate 367–proline 379 and asparagine 386–asparagine 395. Residues valine 742–asparagine 762 form a helical membrane-spanning segment. Residues valine 763–serine 771 lie on the Extracellular side of the membrane. Residues isoleucine 772–leucine 792 form a helical membrane-spanning segment. The Cytoplasmic portion of the chain corresponds to alanine 793–asparagine 858.

The protein belongs to the CorA metal ion transporter (MIT) (TC 1.A.35) family.

It is found in the cell membrane. Its function is as follows. Plasma membrane magnesium transporter. This is Magnesium transporter ALR2 (ALR2) from Saccharomyces cerevisiae (strain ATCC 204508 / S288c) (Baker's yeast).